A 100-amino-acid chain; its full sequence is Integration host factor subunit alpha (100 aa).

Belongs to the bacterial histone-like protein family. Heterodimer of an alpha and a beta chain.

This protein is one of the two subunits of integration host factor, a specific DNA-binding protein that functions in genetic recombination as well as in transcriptional and translational control. The polypeptide is Integration host factor subunit alpha (Erythrobacter litoralis (strain HTCC2594)).